We begin with the raw amino-acid sequence, 454 residues long: MSHNDTIVAQATPPGRGGVGILRISGLKAREVAEAVLGKLPKPRYADYLPFNDADGTALDQGIALWFPGPNSFTGEDVLELQGHGGPVILDLLLKRILTLPGLRIAKPGEFSERAFLNDKLDLAQAEAIADLIDASSEQAARSALNSLQGAFSTRVNHLVEALTHLRIYVEAAIDFPDEEIDFLSDGKIEAQLNTVMADLDAVRAEARQGSLLREGMKVVIAGRPNAGKSSLLNALAGREAAIVTDIAGTTRDVLREHIHIDGMPLHIIDTAGLRDASDEVERIGIERAWQEIEQADRVLFMVDGTTTSAVDPADIWPDFIARLPAKLPITVVRNKADMTGETLGLSDVNGHSLIRLSARTGEGVEDLRNHLKQSMGFETNMEGGFLARRRHLQALEAAANHLDQGKAQLLGAWAGELLAEELRLAQQSLSEITGEFTSDDLLGRIFSSFCIGK.

The (6S)-5-formyl-5,6,7,8-tetrahydrofolate site is built by R23, E80, and K120. Positions 216–377 (GMKVVIAGRP…LRNHLKQSMG (162 aa)) constitute a TrmE-type G domain. N226 is a binding site for K(+). Residues 226–231 (NAGKSS), 245–251 (TDIAGTT), 270–273 (DTAG), 335–338 (NKAD), and 358–360 (SAR) contribute to the GTP site. S230 contributes to the Mg(2+) binding site. Residues T245, I247, and T250 each coordinate K(+). T251 lines the Mg(2+) pocket. A (6S)-5-formyl-5,6,7,8-tetrahydrofolate-binding site is contributed by K454.

It belongs to the TRAFAC class TrmE-Era-EngA-EngB-Septin-like GTPase superfamily. TrmE GTPase family. As to quaternary structure, homodimer. Heterotetramer of two MnmE and two MnmG subunits. It depends on K(+) as a cofactor.

It localises to the cytoplasm. Functionally, exhibits a very high intrinsic GTPase hydrolysis rate. Involved in the addition of a carboxymethylaminomethyl (cmnm) group at the wobble position (U34) of certain tRNAs, forming tRNA-cmnm(5)s(2)U34. The protein is tRNA modification GTPase MnmE of Enterobacter sp. (strain 638).